A 358-amino-acid chain; its full sequence is Protein RecA (358 aa).

67–74 (GPESSGKT) is a binding site for ATP.

This sequence belongs to the RecA family.

The protein localises to the cytoplasm. Can catalyze the hydrolysis of ATP in the presence of single-stranded DNA, the ATP-dependent uptake of single-stranded DNA by duplex DNA, and the ATP-dependent hybridization of homologous single-stranded DNAs. It interacts with LexA causing its activation and leading to its autocatalytic cleavage. This is Protein RecA from Xenorhabdus nematophila (strain ATCC 19061 / DSM 3370 / CCUG 14189 / LMG 1036 / NCIMB 9965 / AN6).